We begin with the raw amino-acid sequence, 98 residues long: Plastocyanin (98 aa).

A Plastocyanin-like domain is found at 1–98 (AQIVKLGGDD…AGMKMTITVQ (98 aa)). 4 residues coordinate Cu(2+): His-38, Cys-83, His-86, and Met-91.

It belongs to the plastocyanin family. The cofactor is Cu(2+).

The protein resides in the plastid. Its subcellular location is the chloroplast thylakoid membrane. In terms of biological role, participates in electron transfer between P700 and the cytochrome b6-f complex in photosystem I. Has antiviral activity against Potato virus Y (strain N). This chain is Plastocyanin (PETE), found in Ulva pertusa (Sea lettuce).